We begin with the raw amino-acid sequence, 440 residues long: MKVLFTTFAAKSHMHAQVPLAWALQTAGHEVRIASQPDLAEDITRTGLTAVCVGEPLLLEEQMQRVNEGLGDDAEIMESQAEAGMDMTETRPEMLTWDHVLGVFTSMTAMAFQNSCPERMIDDVVAFAREWQPDLIVWDTLSFAGPVAAQVTGAAHARLLFGLDLLGRMRETFLDLQEERLPEQRDDPLREWLTWTLGRYGAEFEEEVAVGQWTVDPVPPSMRFPVKQPFVPLRYIPYNGQAVIPDWLHEPPKKRRVCLTLGVAHREVLDGDRASIGELVEALAELDVEVVATLNEKQLAGMELPDNVRAVDFVPLNALLPTCSAVIHHGGSGTFQTALAHGVPQLIVPDMVWDTIHKAKQLERFGAGLYLHDVDNYTAQDLRDHLLRLLEEPSFAENCARIRREMVGTPSPNDIVPLLEKLTAEHRRDRGARGTVRGEQ.

The catalysed reaction is dTDP-2-deoxy-beta-L-fucose + aclacinomycin T = aclacinomycin S + dTDP + H(+). Functionally, involved in the biosynthesis of the trisaccharide moiety characteristic of the antitumor drug aclacinomycins. In the first reaction, AknK catalyzes the transfer of 2-deoxy-beta-L-fucose from the activated donor dTDP-2-deoxy-beta-L-fucose to the mono-glycosylated aclacinomycin T (rhodosaminyl aklavinone), forming the di-glycosylated aclacinomycin S (L-2-deoxyfucosyl-L-rhodosaminyl aklavinone). It can also catalyze the addition of an alternate dTDP-L-sugar, dTDP-L-daunosamine, to aclacinomycin T and the addition of 2-deoxy-beta-L-fucose to the mono-glycosylated aglycones (monoglycosylated anthracyclines) such as daunomycin (daunorubicin), adriamycin (doxorubicin) and idarubicin. In vitro, AknK also catalyzes the addition of a second L-2-deoxyfucosyl moiety from dTDP-2-deoxy-beta-L-fucose, albeit with reduced activity, to the natural disaccharide chain of aclacinomycin S to produce L-deoxyfucosyl-L-deoxyfucosyl-L-rhodosaminyl aklavinone (2-deoxy-alpha-D-fucosyl-aclacinomycin S), a variant of the natural aclacinomycin A. The protein is Aclacinomycin-T 2-deoxy-L-fucose transferase of Streptomyces galilaeus.